A 503-amino-acid polypeptide reads, in one-letter code: Na(+)-translocating NADH-quinone reductase subunit B (503 aa).

4 consecutive transmembrane segments (helical) span residues 55 to 75, 120 to 142, 161 to 181, and 186 to 206; these read MILV…NSGV, IFLP…FAVI, TLPP…GVVV, and FGGT…FLFF. Threonine 248 is subject to FMN phosphoryl threonine. The next 5 helical transmembrane spans lie at 361–381, 387–407, 417–437, 452–472, and 475–495; these read TSTF…IASW, FGIG…LIVG, FFIP…LVFM, WIYG…NPAY, and GVML…YFAV.

The protein belongs to the NqrB/RnfD family. Composed of six subunits; NqrA, NqrB, NqrC, NqrD, NqrE and NqrF. FMN serves as cofactor.

The protein localises to the cell inner membrane. The catalysed reaction is a ubiquinone + n Na(+)(in) + NADH + H(+) = a ubiquinol + n Na(+)(out) + NAD(+). In terms of biological role, NQR complex catalyzes the reduction of ubiquinone-1 to ubiquinol by two successive reactions, coupled with the transport of Na(+) ions from the cytoplasm to the periplasm. NqrA to NqrE are probably involved in the second step, the conversion of ubisemiquinone to ubiquinol. In Chlamydia felis (strain Fe/C-56) (Chlamydophila felis), this protein is Na(+)-translocating NADH-quinone reductase subunit B.